The primary structure comprises 350 residues: Probable poly-beta-1,6-N-acetyl-D-glucosamine export protein (350 aa).

A run of 10 helical transmembrane segments spans residues 8 to 28, 40 to 60, 83 to 103, 119 to 139, 146 to 166, 182 to 202, 216 to 236, 254 to 274, 276 to 296, and 308 to 328; these read LVYL…LTQI, LVLQ…FIIL, YILI…SLLT, QWYG…YIIF, FNSK…LYYF, LSEN…AYMG, LVIM…LANG, IMFI…FNTI, MISA…DSLF, and VFLA…GMIL.

It belongs to the acyltransferase 3 family.

It localises to the cell membrane. Presumably involved in the export of the biofilm adhesin polysaccharide poly-beta-1,6-N-acetyl-D-glucosamine (PNAG, also referred to as PIA) across the cell membrane. This chain is Probable poly-beta-1,6-N-acetyl-D-glucosamine export protein (icaC), found in Staphylococcus aureus (strain NCTC 8325 / PS 47).